The sequence spans 133 residues: MGNDAIDDVTTAPRNASSRGAETVRVSSTDITISIGRVLVEEGFSGNPREHRQGTNRFPVSTSKYQGRTRKARITTRRRVSKPGLRIYPGYKDIPEVSGGIGTATPPTPGGTTTDREARQKRIGGEAPRHVWR.

2 disordered regions span residues 1 to 23 (MGND…GAET) and 44 to 133 (FSGN…HVWR). 2 stretches are compositionally biased toward polar residues: residues 12-23 (APRNASSRGAET) and 55-66 (TNRFPVSTSKYQ). Basic residues predominate over residues 67 to 81 (GRTRKARITTRRRVS). The segment covering 114-133 (TDREARQKRIGGEAPRHVWR) has biased composition (basic and acidic residues).

It belongs to the universal ribosomal protein uS8 family. Part of the 30S ribosomal subunit.

Its subcellular location is the plastid. The protein resides in the chloroplast. In terms of biological role, one of the primary rRNA binding proteins, it binds directly to 16S rRNA central domain where it helps coordinate assembly of the platform of the 30S subunit. The protein is Small ribosomal subunit protein uS8c (rps8) of Selaginella uncinata (Blue spike-moss).